A 473-amino-acid polypeptide reads, in one-letter code: MKTLYSLRRFYPVETLFNGTLALAGRDQETTGFAWWAGNARLINLSGKLLGAHVAHAGLIVFWAGAMNLFEVAHFVPEKPMYEQGLILLPHLATLGWGVGPGGEVIDTFPYFVSGVLHLISSAVLGFGGIYHALLGPETLEESFPFFGYVWKDRNKMTTILGIHLILLGIGAFLLVLKALYFGGVYDTWAPGGGDVRRITNLTLSPSVIFGYLLKSPFGGEGWIVSVDDLEDIIGGHVWVGAICILGGTWHILTKPFAWARRALVWSGEAYLSYSLGALSVFGFIACCFVWFNNTAYPSEFYGPTGPEASQAQAFTFLVRDQRLGANVGSAQGPTGLGKYLMRSPTGEVIFGGETMRFWDLRAPWLEPLRGPNGLDLSRLKKDIQPWQERRSAEYMTHAPLGSLNSVGGVATEINAVNYVSPRSWLATSHFVLGFFLFVGHLWHAGRARAAAAGFEKGIDRDFEPVLSMTPLN.

The propeptide occupies 1-14; it reads MKTLYSLRRFYPVE. Thr15 is modified (N-acetylthreonine). The residue at position 15 (Thr15) is a Phosphothreonine. The next 5 helical transmembrane spans lie at 69 to 93, 134 to 155, 178 to 200, 255 to 275, and 291 to 312; these read LFEVAHFVPEKPMYEQGLILLPHLA, LLGPETLEESFPFFGYVWKDRN, KALYFGGVYDTWAPGGGDVRRIT, KPFAWARRALVWSGEAYLSYS, and WFNNTAYPSEFYGPTGPEASQA. Position 367 (Glu367) interacts with [CaMn4O5] cluster. The helical transmembrane segment at 447-471 threads the bilayer; sequence RARAAAAGFEKGIDRDFEPVLSMTP.

This sequence belongs to the PsbB/PsbC family. PsbC subfamily. In terms of assembly, PSII is composed of 1 copy each of membrane proteins PsbA, PsbB, PsbC, PsbD, PsbE, PsbF, PsbH, PsbI, PsbJ, PsbK, PsbL, PsbM, PsbT, PsbX, PsbY, PsbZ, Psb30/Ycf12, at least 3 peripheral proteins of the oxygen-evolving complex and a large number of cofactors. It forms dimeric complexes. Binds multiple chlorophylls and provides some of the ligands for the Ca-4Mn-5O cluster of the oxygen-evolving complex. It may also provide a ligand for a Cl- that is required for oxygen evolution. PSII binds additional chlorophylls, carotenoids and specific lipids. serves as cofactor.

Its subcellular location is the plastid. It localises to the chloroplast thylakoid membrane. In terms of biological role, one of the components of the core complex of photosystem II (PSII). It binds chlorophyll and helps catalyze the primary light-induced photochemical processes of PSII. PSII is a light-driven water:plastoquinone oxidoreductase, using light energy to abstract electrons from H(2)O, generating O(2) and a proton gradient subsequently used for ATP formation. The chain is Photosystem II CP43 reaction center protein from Illicium oligandrum (Star anise).